Consider the following 142-residue polypeptide: Hemoglobin subunit alpha-2 (142 aa).

One can recognise a Globin domain in the interval 2–142 (VLSAADKSNI…VSTVLTSKYR (141 aa)). His59 is a binding site for O2. His88 is a heme b binding site.

The protein belongs to the globin family. As to quaternary structure, heterotetramer of two alpha chains and two beta chains. In terms of tissue distribution, red blood cells.

In terms of biological role, involved in oxygen transport from the lung to the various peripheral tissues. The sequence is that of Hemoglobin subunit alpha-2 from Bubalus bubalis (Domestic water buffalo).